The chain runs to 612 residues: Dihydroxy-acid dehydratase (612 aa).

Residue aspartate 81 coordinates Mg(2+). A [2Fe-2S] cluster-binding site is contributed by cysteine 122. 2 residues coordinate Mg(2+): aspartate 123 and lysine 124. Lysine 124 is modified (N6-carboxylysine). Residue cysteine 193 participates in [2Fe-2S] cluster binding. Glutamate 489 contributes to the Mg(2+) binding site. Serine 515 acts as the Proton acceptor in catalysis.

The protein belongs to the IlvD/Edd family. Homodimer. [2Fe-2S] cluster serves as cofactor. The cofactor is Mg(2+).

It carries out the reaction (2R)-2,3-dihydroxy-3-methylbutanoate = 3-methyl-2-oxobutanoate + H2O. The catalysed reaction is (2R,3R)-2,3-dihydroxy-3-methylpentanoate = (S)-3-methyl-2-oxopentanoate + H2O. Its pathway is amino-acid biosynthesis; L-isoleucine biosynthesis; L-isoleucine from 2-oxobutanoate: step 3/4. It functions in the pathway amino-acid biosynthesis; L-valine biosynthesis; L-valine from pyruvate: step 3/4. Functions in the biosynthesis of branched-chain amino acids. Catalyzes the dehydration of (2R,3R)-2,3-dihydroxy-3-methylpentanoate (2,3-dihydroxy-3-methylvalerate) into 2-oxo-3-methylpentanoate (2-oxo-3-methylvalerate) and of (2R)-2,3-dihydroxy-3-methylbutanoate (2,3-dihydroxyisovalerate) into 2-oxo-3-methylbutanoate (2-oxoisovalerate), the penultimate precursor to L-isoleucine and L-valine, respectively. This chain is Dihydroxy-acid dehydratase, found in Xanthomonas euvesicatoria pv. vesicatoria (strain 85-10) (Xanthomonas campestris pv. vesicatoria).